The following is a 314-amino-acid chain: Nucleotide-binding protein CE1710 (314 aa).

Residues 1–29 form a disordered region; sequence MNQTPGSTVPETATPVTSPASSPSAPETT. The span at 7–29 shows a compositional bias: low complexity; sequence STVPETATPVTSPASSPSAPETT. Residue 37 to 44 coordinates ATP; sequence GMSGAGLS. 88–91 lines the GTP pocket; it reads DVRS.

Belongs to the RapZ-like family.

Its function is as follows. Displays ATPase and GTPase activities. This Corynebacterium efficiens (strain DSM 44549 / YS-314 / AJ 12310 / JCM 11189 / NBRC 100395) protein is Nucleotide-binding protein CE1710.